Consider the following 40-residue polypeptide: Photosystem II reaction center protein J (40 aa).

Residues 8–28 (IPLWIIGTVAGILVIGLIGIF) traverse the membrane as a helical segment.

Belongs to the PsbJ family. In terms of assembly, PSII is composed of 1 copy each of membrane proteins PsbA, PsbB, PsbC, PsbD, PsbE, PsbF, PsbH, PsbI, PsbJ, PsbK, PsbL, PsbM, PsbT, PsbX, PsbY, PsbZ, Psb30/Ycf12, at least 3 peripheral proteins of the oxygen-evolving complex and a large number of cofactors. It forms dimeric complexes.

Its subcellular location is the plastid. It is found in the chloroplast thylakoid membrane. In terms of biological role, one of the components of the core complex of photosystem II (PSII). PSII is a light-driven water:plastoquinone oxidoreductase that uses light energy to abstract electrons from H(2)O, generating O(2) and a proton gradient subsequently used for ATP formation. It consists of a core antenna complex that captures photons, and an electron transfer chain that converts photonic excitation into a charge separation. In Oenothera elata subsp. hookeri (Hooker's evening primrose), this protein is Photosystem II reaction center protein J.